Reading from the N-terminus, the 459-residue chain is DNA-binding protein P3A2 (459 aa).

A disordered region spans residues 1 to 25 (MMISEDISEPSSPDTPFDDSDLLNS).

It belongs to the NRF1/Ewg family.

It is found in the nucleus. In terms of biological role, transcriptional regulator that interacts with specific sites in the control region of the cyIIIa actin gene. Also binds specifically to similar target sites located in the regulatory region of the SM50 gene. This is DNA-binding protein P3A2 from Strongylocentrotus purpuratus (Purple sea urchin).